Here is a 652-residue protein sequence, read N- to C-terminus: uncharacterized protein (652 aa).

2 stretches are compositionally biased toward basic and acidic residues: residues 1–13 (MSVTESKAKTERK) and 641–652 (ATERTDNLADAA). 2 disordered regions span residues 1 to 21 (MSVTESKAKTERKSSRKPAKT) and 628 to 652 (VPGWMCAPRPQTDATERTDNLADAA).

The protein belongs to the ParB family.

This is an uncharacterized protein from Escherichia coli O157:H7.